The chain runs to 222 residues: Protein-L-isoaspartate O-methyltransferase (222 aa).

Residue Ser-70 is part of the active site.

The protein belongs to the methyltransferase superfamily. L-isoaspartyl/D-aspartyl protein methyltransferase family.

It localises to the cytoplasm. It carries out the reaction [protein]-L-isoaspartate + S-adenosyl-L-methionine = [protein]-L-isoaspartate alpha-methyl ester + S-adenosyl-L-homocysteine. In terms of biological role, catalyzes the methyl esterification of L-isoaspartyl residues in peptides and proteins that result from spontaneous decomposition of normal L-aspartyl and L-asparaginyl residues. It plays a role in the repair and/or degradation of damaged proteins. The protein is Protein-L-isoaspartate O-methyltransferase of Jannaschia sp. (strain CCS1).